The following is a 149-amino-acid chain: Calmodulin (149 aa).

Thr-2 is modified (N-acetylthreonine). EF-hand domains are found at residues 8 to 43, 44 to 79, 81 to 116, and 117 to 149; these read EQIAEFKEAFSLFDKDGDGTITTKELGTVMRSLGQN, PTEAELQDMINEVDADGNGTIDFPEFLTMMARKMKE, DSEEEIREAFRVFDKDGNGFISAAELRHVMTNLGEK, and LTDEEVDEMIREADIDGDGQVNYEEFVAMMTSK. Ca(2+)-binding residues include Asp-21, Asp-23, Asp-25, Thr-27, Glu-32, Asp-57, Asp-59, Asn-61, Thr-63, Glu-68, Asp-94, Asp-96, Asn-98, and Glu-105. N6,N6,N6-trimethyllysine is present on Lys-116. Residues Asp-130, Asp-132, Asp-134, Gln-136, and Glu-141 each contribute to the Ca(2+) site.

This sequence belongs to the calmodulin family.

Its function is as follows. Calmodulin mediates the control of a large number of enzymes, ion channels and other proteins by Ca(2+). Among the enzymes to be stimulated by the calmodulin-Ca(2+) complex are a number of protein kinases and phosphatases. The protein is Calmodulin of Halichondria okadai (Marine sponge).